Here is an 881-residue protein sequence, read N- to C-terminus: Phosphoenolpyruvate carboxylase (881 aa).

Catalysis depends on residues His-142 and Lys-547.

The protein belongs to the PEPCase type 1 family. It depends on Mg(2+) as a cofactor.

The enzyme catalyses oxaloacetate + phosphate = phosphoenolpyruvate + hydrogencarbonate. In terms of biological role, forms oxaloacetate, a four-carbon dicarboxylic acid source for the tricarboxylic acid cycle. The chain is Phosphoenolpyruvate carboxylase from Hahella chejuensis (strain KCTC 2396).